The primary structure comprises 357 residues: Quinolinate synthase (357 aa).

2 residues coordinate iminosuccinate: H50 and S71. C116 contacts [4Fe-4S] cluster. Residues 142–144 and S159 contribute to the iminosuccinate site; that span reads YAN. C203 provides a ligand contact to [4Fe-4S] cluster. Iminosuccinate is bound by residues 229-231 and T246; that span reads HPE. C300 provides a ligand contact to [4Fe-4S] cluster.

It belongs to the quinolinate synthase family. Type 1 subfamily. Requires [4Fe-4S] cluster as cofactor.

Its subcellular location is the cytoplasm. It catalyses the reaction iminosuccinate + dihydroxyacetone phosphate = quinolinate + phosphate + 2 H2O + H(+). It functions in the pathway cofactor biosynthesis; NAD(+) biosynthesis; quinolinate from iminoaspartate: step 1/1. In terms of biological role, catalyzes the condensation of iminoaspartate with dihydroxyacetone phosphate to form quinolinate. This Shewanella sp. (strain MR-4) protein is Quinolinate synthase.